A 197-amino-acid polypeptide reads, in one-letter code: Peptide deformylase (197 aa).

Residues Cys-106 and His-148 each contribute to the Fe cation site. The active site involves Glu-149. His-152 serves as a coordination point for Fe cation.

It belongs to the polypeptide deformylase family. Fe(2+) serves as cofactor.

The enzyme catalyses N-terminal N-formyl-L-methionyl-[peptide] + H2O = N-terminal L-methionyl-[peptide] + formate. Its function is as follows. Removes the formyl group from the N-terminal Met of newly synthesized proteins. Requires at least a dipeptide for an efficient rate of reaction. N-terminal L-methionine is a prerequisite for activity but the enzyme has broad specificity at other positions. The polypeptide is Peptide deformylase (Mycobacterium bovis (strain ATCC BAA-935 / AF2122/97)).